The following is a 410-amino-acid chain: Adenosine receptor A2a (410 aa).

The Extracellular segment spans residues 1–4 (MGSS). A helical membrane pass occupies residues 5–29 (VYIMVELAIAVLAILGNVLVCWAVW). The Cytoplasmic portion of the chain corresponds to 30–39 (INSNLQNVTN). The chain crosses the membrane as a helical span at residues 40 to 63 (FFVVSLAAADIAVGVLAIPFAITI). The Extracellular portion of the chain corresponds to 64–74 (STGFCAACHGC). 3 disulfide bridges follow: C68/C154, C71/C143, and C74/C161. Residues 75-97 (LFFACFVLVLTQSSIFSLLAIAI) traverse the membrane as a helical segment. Topologically, residues 98–117 (DRYIAIRIPLRYNGLVTGMR) are cytoplasmic. A helical transmembrane segment spans residues 118–140 (AKGIIAICWVLSFAIGLTPMLGW). The Extracellular segment spans residues 141 to 168 (NNCSQKDENSTKTCGEGRVTCLFEDVVP). N142 and N149 each carry an N-linked (GlcNAc...) asparagine glycan. E164 contacts adenosine. The helical transmembrane segment at 169 to 193 (MNYMVYYNFFAFVLLPLLLMLAIYL) threads the bilayer. The Cytoplasmic portion of the chain corresponds to 194–229 (RIFLAARRQLKQMESQPLPGERTRSTLQKEVHAAKS). Residues 230-253 (LAIIVGLFALCWLPLHIINCFTFF) traverse the membrane as a helical segment. N248 is a binding site for adenosine. The cysteines at positions 254 and 257 are disulfide-linked. Over 254-261 (CSTCQHAP) the chain is Extracellular. The chain crosses the membrane as a helical span at residues 262-285 (PWLMYLAIILSHSNSVVNPFIYAY). The adenosine site is built by S272 and H273. At 286-410 (RIREFRQTFR…ASWSSEFAPS (125 aa)) the chain is on the cytoplasmic side. An interaction with GAS2L2 region spans residues 322 to 410 (HSTEGEQVSL…ASWSSEFAPS (89 aa)). Residues 342-410 (ANGSAPHSGR…ASWSSEFAPS (69 aa)) form a disordered region. Residues 377–389 (TQEHQEGQEHPGL) are compositionally biased toward basic and acidic residues. Residues 401-410 (ASWSSEFAPS) show a composition bias toward polar residues.

The protein belongs to the G-protein coupled receptor 1 family. In terms of assembly, interacts (via cytoplasmic C-terminal domain) with USP4; the interaction is direct. May interact with DRD4. Interacts with NECAB2. Interacts (via cytoplasmic C-terminal domain) with GAS2L2; interaction enhances receptor-mediated adenylyl cyclase activity. In terms of processing, ubiquitinated. Deubiquitinated by USP4; leading to stabilization and expression at the cell surface.

It is found in the cell membrane. Functionally, receptor for adenosine. The activity of this receptor is mediated by G proteins which activate adenylyl cyclase. The chain is Adenosine receptor A2a (Adora2a) from Mus musculus (Mouse).